We begin with the raw amino-acid sequence, 405 residues long: Argininosuccinate synthase (405 aa).

ATP is bound by residues 10 to 18 (AYSGGLDTS) and Ala37. L-citrulline is bound by residues Tyr88 and Ser93. Gly118 is an ATP binding site. Residues Thr120, Asn124, and Asp125 each coordinate L-aspartate. Asn124 contacts L-citrulline. L-citrulline-binding residues include Arg128, Ser179, Ser188, Glu264, and Tyr276.

The protein belongs to the argininosuccinate synthase family. Type 1 subfamily. As to quaternary structure, homotetramer.

Its subcellular location is the cytoplasm. The catalysed reaction is L-citrulline + L-aspartate + ATP = 2-(N(omega)-L-arginino)succinate + AMP + diphosphate + H(+). It participates in amino-acid biosynthesis; L-arginine biosynthesis; L-arginine from L-ornithine and carbamoyl phosphate: step 2/3. The sequence is that of Argininosuccinate synthase from Pseudomonas fluorescens (strain SBW25).